Consider the following 126-residue polypeptide: MSNVPADLKYTDEHEWIRTEADGTLTVGITDHAQSTLGDIVFLELPEVGKSVNAGDAVGVVESVKAASDIYSPVSGEVVAVNEAATDAPEEVNGDAYGVWLFKIKLAAGASTDKLIDADAYSKLID.

A Lipoyl-binding domain is found at 24 to 105 (TLTVGITDHA…AYGVWLFKIK (82 aa)). K65 carries the N6-lipoyllysine modification.

It belongs to the GcvH family. As to quaternary structure, the glycine cleavage system is composed of four proteins: P, T, L and H. The cofactor is (R)-lipoate.

The glycine cleavage system catalyzes the degradation of glycine. The H protein shuttles the methylamine group of glycine from the P protein to the T protein. The polypeptide is Glycine cleavage system H protein (Burkholderia cenocepacia (strain HI2424)).